We begin with the raw amino-acid sequence, 375 residues long: Growth/differentiation factor 8 (375 aa).

The N-terminal stretch at 1-23 (MQKLAVYVYIYLFMLISVDPVAL) is a signal peptide. Residues 24–266 (DDGSQPTENA…VTDTPKRSRR (243 aa)) constitute a propeptide that is removed on maturation. Asparagine 71 carries an N-linked (GlcNAc...) asparagine glycan. 4 disulfides stabilise this stretch: cysteine 272–cysteine 282, cysteine 281–cysteine 340, cysteine 309–cysteine 372, and cysteine 313–cysteine 374.

The protein belongs to the TGF-beta family. In terms of assembly, homodimer; disulfide-linked.

Its subcellular location is the secreted. Acts specifically as a negative regulator of skeletal muscle growth. The chain is Growth/differentiation factor 8 (MSTN) from Anser anser anser (Western greylag goose).